A 305-amino-acid polypeptide reads, in one-letter code: Protein EXORDIUM-like 2 (305 aa).

The N-terminal stretch at 1-23 is a signal peptide; sequence MASNYRFAIFLTLFFATAGFSAA. An N-linked (GlcNAc...) asparagine glycan is attached at N44.

Belongs to the EXORDIUM family.

It localises to the secreted. The protein resides in the extracellular space. The protein localises to the apoplast. Its function is as follows. May play a role in a brassinosteroid-dependent regulation of growth and development. This Arabidopsis thaliana (Mouse-ear cress) protein is Protein EXORDIUM-like 2 (EXL2).